The chain runs to 356 residues: Isocitrate dehydrogenase [NAD] subunit 1, mitochondrial (356 aa).

Residues arginine 106, arginine 137, and aspartate 224 each contribute to the substrate site. Aspartate 224 is a Mg(2+) binding site.

This sequence belongs to the isocitrate and isopropylmalate dehydrogenases family. In terms of assembly, octamer of two non-identical subunits IDH1 and IDH2. Requires Mg(2+) as cofactor. Mn(2+) serves as cofactor.

Its subcellular location is the mitochondrion. It carries out the reaction D-threo-isocitrate + NAD(+) = 2-oxoglutarate + CO2 + NADH. Its function is as follows. Performs an essential role in the oxidative function of the citric acid cycle. Also binds RNA; specifically to the 5'-untranslated leaders of mitochondrial mRNAs. This chain is Isocitrate dehydrogenase [NAD] subunit 1, mitochondrial (idh1), found in Schizosaccharomyces pombe (strain 972 / ATCC 24843) (Fission yeast).